The primary structure comprises 231 residues: 5'-methylthioadenosine/S-adenosylhomocysteine nucleosidase (231 aa).

The active-site Proton acceptor is the Glu12. Substrate-binding positions include Gly78, Met153, and 174-175 (ME). The Proton donor role is filled by Asp198.

This sequence belongs to the PNP/UDP phosphorylase family. MtnN subfamily.

It catalyses the reaction S-adenosyl-L-homocysteine + H2O = S-(5-deoxy-D-ribos-5-yl)-L-homocysteine + adenine. The catalysed reaction is S-methyl-5'-thioadenosine + H2O = 5-(methylsulfanyl)-D-ribose + adenine. It carries out the reaction 5'-deoxyadenosine + H2O = 5-deoxy-D-ribose + adenine. Its pathway is amino-acid biosynthesis; L-methionine biosynthesis via salvage pathway; S-methyl-5-thio-alpha-D-ribose 1-phosphate from S-methyl-5'-thioadenosine (hydrolase route): step 1/2. Its function is as follows. Catalyzes the irreversible cleavage of the glycosidic bond in both 5'-methylthioadenosine (MTA) and S-adenosylhomocysteine (SAH/AdoHcy) to adenine and the corresponding thioribose, 5'-methylthioribose and S-ribosylhomocysteine, respectively. Also cleaves 5'-deoxyadenosine, a toxic by-product of radical S-adenosylmethionine (SAM) enzymes, into 5-deoxyribose and adenine. In Bacillus velezensis (strain DSM 23117 / BGSC 10A6 / LMG 26770 / FZB42) (Bacillus amyloliquefaciens subsp. plantarum), this protein is 5'-methylthioadenosine/S-adenosylhomocysteine nucleosidase.